A 1200-amino-acid chain; its full sequence is Nuclear pore complex protein Nup133 (1200 aa).

The interval Met1–Ala28 is disordered.

It belongs to the nucleoporin Nup133 family. As to quaternary structure, forms part of the Nup107-Nup160 subcomplex in the nuclear pore.

The protein localises to the nucleus. Its subcellular location is the nuclear pore complex. In terms of biological role, probable component of the nuclear pore complex (NPC). Plays a role in NPC assembly and/or maintenance. In Drosophila melanogaster (Fruit fly), this protein is Nuclear pore complex protein Nup133.